The chain runs to 224 residues: Phosphoglycolate phosphatase (224 aa).

Catalysis depends on aspartate 11, which acts as the Nucleophile. Mg(2+) is bound by residues aspartate 11, aspartate 13, and aspartate 177.

The protein belongs to the HAD-like hydrolase superfamily. CbbY/CbbZ/Gph/YieH family. The cofactor is Mg(2+).

The enzyme catalyses 2-phosphoglycolate + H2O = glycolate + phosphate. It participates in organic acid metabolism; glycolate biosynthesis; glycolate from 2-phosphoglycolate: step 1/1. Specifically catalyzes the dephosphorylation of 2-phosphoglycolate. Is involved in the dissimilation of the intracellular 2-phosphoglycolate formed during the DNA repair of 3'-phosphoglycolate ends, a major class of DNA lesions induced by oxidative stress. This is Phosphoglycolate phosphatase from Mannheimia succiniciproducens (strain KCTC 0769BP / MBEL55E).